A 76-amino-acid chain; its full sequence is uncharacterized protein (76 aa).

This is an uncharacterized protein from Acidianus bottle-shaped virus (isolate Italy/Pozzuoli) (ABV).